Reading from the N-terminus, the 322-residue chain is Polyisoprenyl-teichoic acid--peptidoglycan teichoic acid transferase TagT (322 aa).

At Met-1–Lys-19 the chain is on the cytoplasmic side. A helical; Signal-anchor for type II membrane protein transmembrane segment spans residues Val-20–Phe-40. Residues Val-41–Val-322 lie on the Extracellular side of the membrane.

Belongs to the LytR/CpsA/Psr (LCP) family. As to quaternary structure, interacts with MreB.

It localises to the cell membrane. It functions in the pathway cell wall biogenesis. Functionally, may catalyze the final step in cell wall teichoic acid biosynthesis, the transfer of the anionic cell wall polymers (APs) from their lipid-linked precursor to the cell wall peptidoglycan (PG). This Bacillus subtilis (strain 168) protein is Polyisoprenyl-teichoic acid--peptidoglycan teichoic acid transferase TagT.